A 309-amino-acid polypeptide reads, in one-letter code: Serine/threonine-protein phosphatase 2A catalytic subunit alpha isoform (309 aa).

Mn(2+)-binding residues include Asp-57, His-59, Asp-85, and Asn-117. Residues Asp-57, His-59, and Asp-85 each coordinate Zn(2+). Fe(3+) is bound by residues Asp-85 and Asn-117. The Proton donor role is filled by His-118. His-167 and His-241 together coordinate Mn(2+). Fe(3+)-binding residues include His-167 and His-241. Residue Tyr-307 is modified to Phosphotyrosine. Leu-309 carries the leucine methyl ester modification.

This sequence belongs to the PPP phosphatase family. PP-1 subfamily. PP2A consists of a common heterodimeric core enzyme, composed of PPP2CA, a 36 kDa catalytic subunit (subunit C), and PPP2R1A, a 65 kDa constant regulatory subunit (PR65 or subunit A), that associates with a variety of regulatory subunits. Proteins that associate with the core dimer include three families of regulatory subunits B (the R2/B/PR55/B55, R3/B''/PR72/PR130/PR59 and R5/B'/B56 families), the 48 kDa variable regulatory subunit, viral proteins, and cell signaling molecules. May indirectly interact with SGOL1, most probably through regulatory B56 subunits. Phosphatase component of the Integrator-PP2A (INTAC) complex, composed of the Integrator core complex and protein phosphatase 2A subunits PPP2CA and PPP2R1A. Requires Mn(2+) as cofactor. Fe(3+) serves as cofactor. The cofactor is Zn(2+). Post-translationally, reversibly methyl esterified on Leu-309 by leucine carboxyl methyltransferase 1 (LCMT1) and protein phosphatase methylesterase 1 (PPME1). Carboxyl methylation influences the affinity of the catalytic subunit for the different regulatory subunits, thereby modulating the PP2A holoenzyme's substrate specificity, enzyme activity and cellular localization. In terms of processing, phosphorylation of either threonine (by autophosphorylation-activated protein kinase) or tyrosine results in inactivation of the phosphatase. Auto-dephosphorylation has been suggested as a mechanism for reactivation.

It is found in the cytoplasm. The protein localises to the nucleus. It localises to the chromosome. Its subcellular location is the centromere. The protein resides in the cytoskeleton. It is found in the spindle pole. It catalyses the reaction O-phospho-L-seryl-[protein] + H2O = L-seryl-[protein] + phosphate. The enzyme catalyses O-phospho-L-threonyl-[protein] + H2O = L-threonyl-[protein] + phosphate. With respect to regulation, inhibited by the interaction between PPP2R2A and ARPP19; this inhibition is enhanced when ARPP19 is phosphorylated. Inhibited by the interaction between PPP2R2A and PABIR1/FAM122A. In terms of biological role, PP2A is the major phosphatase for microtubule-associated proteins (MAPs). PP2A can modulate the activity of phosphorylase B kinase casein kinase 2, mitogen-stimulated S6 kinase, and MAP-2 kinase. Key mediator of a quality checkpoint during transcription elongation as part of the Integrator-PP2A (INTAC) complex. The INTAC complex drives premature transcription termination of transcripts that are unfavorably configured for transcriptional elongation: within the INTAC complex, PPP2CA catalyzes dephosphorylation of the C-terminal domain (CTD) of Pol II subunit POLR2A/RPB1 and SUPT5H/SPT5, thereby preventing transcriptional elongation. This is Serine/threonine-protein phosphatase 2A catalytic subunit alpha isoform (PPP2CA) from Gallus gallus (Chicken).